The following is a 386-amino-acid chain: Putative 8-amino-7-oxononanoate synthase 2 (386 aa).

Residue R21 participates in substrate binding. 104–105 is a binding site for pyridoxal 5'-phosphate; the sequence is GY. A substrate-binding site is contributed by H129. Residues S176, 201–204, and 230–233 contribute to the pyridoxal 5'-phosphate site; these read DDAH and TLSK. Position 233 is an N6-(pyridoxal phosphate)lysine (K233).

This sequence belongs to the class-II pyridoxal-phosphate-dependent aminotransferase family. BioF subfamily. As to quaternary structure, homodimer. Requires pyridoxal 5'-phosphate as cofactor.

The enzyme catalyses 6-carboxyhexanoyl-[ACP] + L-alanine + H(+) = (8S)-8-amino-7-oxononanoate + holo-[ACP] + CO2. It participates in cofactor biosynthesis; biotin biosynthesis. Catalyzes the decarboxylative condensation of pimeloyl-[acyl-carrier protein] and L-alanine to produce 8-amino-7-oxononanoate (AON), [acyl-carrier protein], and carbon dioxide. The protein is Putative 8-amino-7-oxononanoate synthase 2 (bioF) of Bacillus velezensis (strain DSM 23117 / BGSC 10A6 / LMG 26770 / FZB42) (Bacillus amyloliquefaciens subsp. plantarum).